The primary structure comprises 151 residues: Large ribosomal subunit protein bL9 (151 aa).

The protein belongs to the bacterial ribosomal protein bL9 family.

Its function is as follows. Binds to the 23S rRNA. This Carboxydothermus hydrogenoformans (strain ATCC BAA-161 / DSM 6008 / Z-2901) protein is Large ribosomal subunit protein bL9.